Here is a 138-residue protein sequence, read N- to C-terminus: Large ribosomal subunit protein uL16 (138 aa).

Basic residues predominate over residues 1–19 (MLSPKRTKYRKAHKGRIHG). The tract at residues 1–21 (MLSPKRTKYRKAHKGRIHGNA) is disordered.

The protein belongs to the universal ribosomal protein uL16 family. In terms of assembly, part of the 50S ribosomal subunit.

Its function is as follows. Binds 23S rRNA and is also seen to make contacts with the A and possibly P site tRNAs. The polypeptide is Large ribosomal subunit protein uL16 (Granulibacter bethesdensis (strain ATCC BAA-1260 / CGDNIH1)).